The sequence spans 86 residues: Anti-adapter protein IraP (86 aa).

Residues methionine 1–methionine 36 adopt a coiled-coil conformation.

This sequence belongs to the IraP family. Interacts with RssB.

The protein resides in the cytoplasm. Functionally, inhibits RpoS proteolysis by regulating RssB activity, thereby increasing the stability of the sigma stress factor RpoS especially during phosphate starvation, but also in stationary phase and during nitrogen starvation. Its effect on RpoS stability is due to its interaction with RssB, which probably blocks the interaction of RssB with RpoS, and the consequent delivery of the RssB-RpoS complex to the ClpXP protein degradation pathway. This Escherichia coli O7:K1 (strain IAI39 / ExPEC) protein is Anti-adapter protein IraP.